The following is a 469-amino-acid chain: Transcription factor SOX-10 (469 aa).

Disordered regions lie at residues 1 to 70, 163 to 203, 215 to 278, 357 to 378, and 436 to 469; these read MAEE…DDDK, LRMQ…QGGA, LDHR…DFGN, AQVKTETAGPQGPSHYSDQPST, and RPLYTAISDPSPSGPQSHSPTHWEQPVYTTLSRP. Residues 23–32 are compositionally biased toward low complexity; the sequence is LSPGSAPSLG. S24 carries the post-translational modification Phosphoserine. The segment covering 33-44 has biased composition (gly residues); it reads PDGGGGGGGGSG. The tract at residues 65-105 is dimerization (DIM); that stretch reads EADDDKFPVCIREAVSQVLSGYDWTLVPMPVRVNGASKSKP. The segment at residues 107-175 is a DNA-binding region (HMG box); it reads VKRPMNAFMV…QHKKDHPDYK (69 aa). Basic and acidic residues-rich tracts occupy residues 163–176 and 257–274; these read LRMQHKKDHPDYKY and ADPKRDGRSMGEGGKPHI. The interval 231–313 is transactivation domain (TAM); that stretch reads PEHPSGQSHG…LPPNGHPGHV (83 aa). A transactivation domain (TAC) region spans residues 356-469; it reads KAQVKTETAG…QPVYTTLSRP (114 aa). Residues 443–469 show a composition bias toward polar residues; the sequence is SDPSPSGPQSHSPTHWEQPVYTTLSRP.

Monomer. Interacts with ARMCX3 at the mitochondrial outer membrane surface. Interacts with PAX3.

It localises to the cytoplasm. The protein localises to the nucleus. Its subcellular location is the mitochondrion outer membrane. Its function is as follows. Transcription factor that plays a central role in developing and mature glia. Specifically activates expression of myelin genes, during oligodendrocyte (OL) maturation, such as DUSP15 and MYRF, thereby playing a central role in oligodendrocyte maturation and CNS myelination. Once induced, MYRF cooperates with SOX10 to implement the myelination program. Transcriptional activator of MITF, acting synergistically with PAX3. Transcriptional activator of MBP, via binding to the gene promoter. This is Transcription factor SOX-10 (SOX10) from Sus scrofa (Pig).